The chain runs to 266 residues: Pyrrolizixenacetamide deacetylase (266 aa).

Position 28 (Thr28) interacts with acetate. Ser94 acts as the Nucleophile in catalysis. Leu95 serves as a coordination point for acetate. Residues Asp215 and His242 each act as charge relay system in the active site. Acetate is bound at residue His242.

This sequence belongs to the AB hydrolase superfamily. As to quaternary structure, homodimer.

The catalysed reaction is pyrrolizixenacetamide + H2O = 3-amino-5,6,7,7a-tetrahydro-1H-pyrrolizin-1-one + acetate + H(+). Involved in the biosynthetic pathway of pyrrolizwilline, a pyrrolizidine alkaloid. Catalyzes the N-deacetylation of pyrrolizixenacetamide. The sequence is that of Pyrrolizixenacetamide deacetylase from Xenorhabdus hominickii.